We begin with the raw amino-acid sequence, 545 residues long: POTE ankyrin domain family member H (545 aa).

ANK repeat units lie at residues 180–208 (LHRA…KKDK), 209–238 (QKRT…QLNI), 242–271 (KKRT…DPNI), 275–304 (YGNT…DIES), 308–337 (HGLT…NLNA), 341–370 (YGRT…DVSS), and 374–404 (SGQT…QILK). The interval 406–524 (SSENSNPEQD…KQLSEEQNTG (119 aa)) is disordered. 2 stretches are compositionally biased toward basic and acidic residues: residues 414–429 (QDLK…RLKG) and 443–458 (EINK…EMKK). A compositionally biased stretch (polar residues) spans 513 to 524 (TQKQLSEEQNTG).

It belongs to the POTE family.

This Homo sapiens (Human) protein is POTE ankyrin domain family member H (POTEH).